The chain runs to 286 residues: Enoyl-CoA hydratase ChsH3 (286 aa).

The MaoC-like domain maps to 163–271 (APERAPDLQV…RLVASVVAPT (109 aa)). Residues Asp-189 and His-194 contribute to the active site.

Belongs to the enoyl-CoA hydratase/isomerase family. In terms of assembly, homodimer.

It carries out the reaction (22E)-3-oxochola-4,22-dien-24-oyl-CoA + H2O = (22S)-hydroxy-3-oxo-chol-4-ene-24-oyl-CoA. The protein operates within steroid metabolism; cholesterol degradation. Its function is as follows. Degradation of the cholesterol side chain involves 3 multistep beta-oxidation cycles, this is involved in the second cycle. Hydrates bulky steroid enoyl-CoA esters, has highest activity with 3-OCDO-CoA (3-oxochol-4,22-dien-24-oyl-CoA) making (22S)-HOCO-CoA, followed by octenoyl-CoA, with weaker activity on 3-OCDS-CoA (3-oxocholest-4,24-dien-26-oyl-CoA) and none on 3-OPDC-CoA (3-oxo-pregna-4,17-diene-20- carboxyl-CoA). Hydrates the same substrate as EchA19, but the 2 enzymes make different stereoisomers of the product. In Mycobacterium tuberculosis (strain ATCC 25618 / H37Rv), this protein is Enoyl-CoA hydratase ChsH3.